The primary structure comprises 140 residues: Ribosomal RNA large subunit methyltransferase H (140 aa).

Leu55 and Gly87 together coordinate S-adenosyl-L-methionine.

It belongs to the RNA methyltransferase RlmH family. As to quaternary structure, homodimer.

The protein resides in the cytoplasm. The catalysed reaction is pseudouridine(1915) in 23S rRNA + S-adenosyl-L-methionine = N(3)-methylpseudouridine(1915) in 23S rRNA + S-adenosyl-L-homocysteine + H(+). Its function is as follows. Specifically methylates the pseudouridine at position 1915 (m3Psi1915) in 23S rRNA. In Rhizorhabdus wittichii (strain DSM 6014 / CCUG 31198 / JCM 15750 / NBRC 105917 / EY 4224 / RW1) (Sphingomonas wittichii), this protein is Ribosomal RNA large subunit methyltransferase H.